Reading from the N-terminus, the 319-residue chain is Cytochrome f (319 aa).

Positions 1-35 are cleaved as a signal peptide; sequence MQKKDVCEYITKWVSVTISTLVTIGVLVFPLSSEA. The heme site is built by tyrosine 36, cysteine 56, cysteine 59, and histidine 60. The helical transmembrane segment at 285-305 threads the bilayer; the sequence is IQGLLVFFASVVLAQIFLVLK.

This sequence belongs to the cytochrome f family. In terms of assembly, the 4 large subunits of the cytochrome b6-f complex are cytochrome b6, subunit IV (17 kDa polypeptide, petD), cytochrome f and the Rieske protein, while the 4 small subunits are PetG, PetL, PetM and PetN. The complex functions as a dimer. It depends on heme as a cofactor.

It localises to the plastid. The protein resides in the chloroplast thylakoid membrane. Functionally, component of the cytochrome b6-f complex, which mediates electron transfer between photosystem II (PSII) and photosystem I (PSI), cyclic electron flow around PSI, and state transitions. This chain is Cytochrome f, found in Zygnema circumcarinatum (Green alga).